A 216-amino-acid polypeptide reads, in one-letter code: Large ribosomal subunit protein uL3 (216 aa).

Polar residues predominate over residues 133-145 (GRATHGNSRSHNV). The segment at 133 to 153 (GRATHGNSRSHNVPGSIGMAQ) is disordered. Gln153 carries the N5-methylglutamine modification.

This sequence belongs to the universal ribosomal protein uL3 family. Part of the 50S ribosomal subunit. Forms a cluster with proteins L14 and L19. Methylated by PrmB.

Its function is as follows. One of the primary rRNA binding proteins, it binds directly near the 3'-end of the 23S rRNA, where it nucleates assembly of the 50S subunit. The polypeptide is Large ribosomal subunit protein uL3 (Burkholderia cenocepacia (strain ATCC BAA-245 / DSM 16553 / LMG 16656 / NCTC 13227 / J2315 / CF5610) (Burkholderia cepacia (strain J2315))).